A 264-amino-acid chain; its full sequence is MKTLWMVLCALARLWPGALAGCAEAGRCCPGRDPACFARGWRLDRVYGTCFCDQACRLTGDCCFDYDRACPARPCFVGEWSPWSGCAGQCQPTTRVRRRSVRQEPLNGGAPCPPLEERAGCLEYSSSQSQDCGHSFVPAFITSSVFNKKRIIQAVSPQWSTHTKDAGYCMEFKTESLTPHCALVNSPLTRWMQYLREGYTVCVDCQPPAMNSVSLRCSGDGLDSDGNQTLRWQAIGNPRCQGTWKKVRRVEQCSCPDVHRFIFI.

Residues 1–20 (MKTLWMVLCALARLWPGALA) form the signal peptide. An SMB domain is found at 24 to 75 (EAGRCCPGRDPACFARGWRLDRVYGTCFCDQACRLTGDCCFDYDRACPARPC). 7 disulfides stabilise this stretch: Cys-28–Cys-36, Cys-28–Cys-52, Cys-36–Cys-70, Cys-50–Cys-52, Cys-50–Cys-63, Cys-56–Cys-62, and Cys-63–Cys-70. The 52-residue stretch at 74–125 (PCFVGEWSPWSGCAGQCQPTTRVRRRSVRQEPLNGGAPCPPLEERAGCLEYS) folds into the TSP type-1 domain. Asn-227 is a glycosylation site (N-linked (GlcNAc...) asparagine).

It belongs to the thrombospondin family.

It localises to the secreted. The protein localises to the extracellular space. The protein resides in the extracellular matrix. The chain is Somatomedin-B and thrombospondin type-1 domain-containing protein (Sbspon) from Mus musculus (Mouse).